Reading from the N-terminus, the 1397-residue chain is DNA-directed RNA polymerase subunit beta' (1397 aa).

Cysteine 71, cysteine 73, cysteine 86, and cysteine 89 together coordinate Zn(2+). 3 residues coordinate Mg(2+): aspartate 462, aspartate 464, and aspartate 466. Zn(2+) is bound by residues cysteine 811, cysteine 885, cysteine 892, and cysteine 895. A disordered region spans residues 1368 to 1397 (QNRDDKILEDQGGATPTASTEIKEPAEGAA). Basic and acidic residues predominate over residues 1388-1397 (EIKEPAEGAA).

The protein belongs to the RNA polymerase beta' chain family. As to quaternary structure, the RNAP catalytic core consists of 2 alpha, 1 beta, 1 beta' and 1 omega subunit. When a sigma factor is associated with the core the holoenzyme is formed, which can initiate transcription. The cofactor is Mg(2+). Requires Zn(2+) as cofactor.

The enzyme catalyses RNA(n) + a ribonucleoside 5'-triphosphate = RNA(n+1) + diphosphate. In terms of biological role, DNA-dependent RNA polymerase catalyzes the transcription of DNA into RNA using the four ribonucleoside triphosphates as substrates. This is DNA-directed RNA polymerase subunit beta' from Parvibaculum lavamentivorans (strain DS-1 / DSM 13023 / NCIMB 13966).